The sequence spans 122 residues: S-adenosylmethionine decarboxylase proenzyme (122 aa).

Residue S63 is the Schiff-base intermediate with substrate; via pyruvic acid of the active site. Position 63 is a pyruvic acid (Ser); by autocatalysis (S63). The active-site Proton acceptor; for processing activity is the H68. C83 serves as the catalytic Proton donor; for catalytic activity.

The protein belongs to the prokaryotic AdoMetDC family. Type 1 subfamily. Heterotetramer of two alpha and two beta chains arranged as a dimer of alpha/beta heterodimers. Pyruvate serves as cofactor. In terms of processing, is synthesized initially as an inactive proenzyme. Formation of the active enzyme involves a self-maturation process in which the active site pyruvoyl group is generated from an internal serine residue via an autocatalytic post-translational modification. Two non-identical subunits are generated from the proenzyme in this reaction, and the pyruvate is formed at the N-terminus of the alpha chain, which is derived from the carboxyl end of the proenzyme. The post-translation cleavage follows an unusual pathway, termed non-hydrolytic serinolysis, in which the side chain hydroxyl group of the serine supplies its oxygen atom to form the C-terminus of the beta chain, while the remainder of the serine residue undergoes an oxidative deamination to produce ammonia and the pyruvoyl group blocking the N-terminus of the alpha chain.

The catalysed reaction is S-adenosyl-L-methionine + H(+) = S-adenosyl 3-(methylsulfanyl)propylamine + CO2. It participates in amine and polyamine biosynthesis; S-adenosylmethioninamine biosynthesis; S-adenosylmethioninamine from S-adenosyl-L-methionine: step 1/1. Its function is as follows. Catalyzes the decarboxylation of S-adenosylmethionine to S-adenosylmethioninamine (dcAdoMet), the propylamine donor required for the synthesis of the polyamines spermine and spermidine from the diamine putrescine. This Methanococcus maripaludis (strain DSM 14266 / JCM 13030 / NBRC 101832 / S2 / LL) protein is S-adenosylmethionine decarboxylase proenzyme.